The following is a 433-amino-acid chain: Tol-Pal system protein TolB (433 aa).

An N-terminal signal peptide occupies residues Met-1–Ala-21.

The protein belongs to the TolB family. As to quaternary structure, the Tol-Pal system is composed of five core proteins: the inner membrane proteins TolA, TolQ and TolR, the periplasmic protein TolB and the outer membrane protein Pal. They form a network linking the inner and outer membranes and the peptidoglycan layer.

The protein resides in the periplasm. Its function is as follows. Part of the Tol-Pal system, which plays a role in outer membrane invagination during cell division and is important for maintaining outer membrane integrity. In Pseudomonas syringae pv. syringae (strain B728a), this protein is Tol-Pal system protein TolB.